A 235-amino-acid polypeptide reads, in one-letter code: MEAKLKTFFAEFGLSIEKEKIQLFERYYRLLISENEKYNLTAVTGEDEVIVKHFLDSTAVLIYRDLTDLNAVDIGTGAGFPGIPLKIMVPGLKLLLLDSLKKRCLFLERVVRELNLTNVTVINERAENLGRQKPFRELFDVTFSRAVAEVRVLLEFHAPLLRLGGETILFKGPGVDEELKKAEKAAKQLGMELKDVYYYRLPGNFGERSLVVYKKLQNTPENYPRRPGIPEKRPL.

Residues Gly-75, Phe-80, 126 to 127 (AE), and Arg-145 contribute to the S-adenosyl-L-methionine site.

It belongs to the methyltransferase superfamily. RNA methyltransferase RsmG family.

It is found in the cytoplasm. Functionally, specifically methylates the N7 position of a guanine in 16S rRNA. This Carboxydothermus hydrogenoformans (strain ATCC BAA-161 / DSM 6008 / Z-2901) protein is Ribosomal RNA small subunit methyltransferase G.